We begin with the raw amino-acid sequence, 154 residues long: Endoribonuclease YbeY (154 aa).

Zn(2+) is bound by residues His-113, His-117, and His-123.

This sequence belongs to the endoribonuclease YbeY family. It depends on Zn(2+) as a cofactor.

The protein localises to the cytoplasm. Single strand-specific metallo-endoribonuclease involved in late-stage 70S ribosome quality control and in maturation of the 3' terminus of the 16S rRNA. The sequence is that of Endoribonuclease YbeY from Vibrio campbellii (strain ATCC BAA-1116).